The chain runs to 45 residues: MAGSNCGCGSSCKCGDSCSCEKNYNKECDNCSCGSNCSCGSSCNC.

The protein belongs to the metallothionein superfamily. Type 15 family. Widely expressed at low levels.

Its function is as follows. Metallothioneins have a high content of cysteine residues that bind various heavy metals. Confers tolerance to cadmium (Cd) and plays a role in Cd and zinc (Zn) homeostasis. The chain is Metallothionein-like protein 1C (MT1C) from Arabidopsis thaliana (Mouse-ear cress).